The primary structure comprises 732 residues: Zinc/cadmium/lead-transporting P-type ATPase (732 aa).

Residues 1-124 (MSTPDNHGKK…QAAEEPQASR (124 aa)) are Cytoplasmic-facing. Positions 48–112 (TRYSWKVSGM…ALQKAGYSLR (65 aa)) constitute an HMA domain. The Zn(2+) site is built by D58, C59, and C62. A helical transmembrane segment spans residues 125-145 (LKENLPLITLIVMMAISWGLE). Position 146 (Q146) is a topological domain, periplasmic. Residues 147 to 167 (FNHPFGQLAFIATTLVGLYPI) form a helical membrane-spanning segment. Topologically, residues 168–179 (ARQALRLIKSGS) are cytoplasmic. A helical membrane pass occupies residues 180–197 (YFAIETLMSVAAIGALFI). The Periplasmic segment spans residues 198–202 (GATAE). The chain crosses the membrane as a helical span at residues 203–222 (AAMVLLLFLIGERLEGWAAS). At 223 to 356 (RARQGVSALM…IDRFSRIYTP (134 aa)) the chain is on the cytoplasmic side. A helical membrane pass occupies residues 357 to 377 (AIMAVALLVTLVPPLLFAASW). The Periplasmic portion of the chain corresponds to 378-383 (QEWIYK). Residues 384–404 (GLTLLLIGCPCALVISTPAAI) form a helical membrane-spanning segment. Residues C392 and C394 each contribute to the Zn(2+) site. The Cytoplasmic portion of the chain corresponds to 405–685 (TSGLAAAARR…RATHANIRQN (281 aa)). The active-site 4-aspartylphosphate intermediate is D436. Residues D436, T438, and D628 each contribute to the Mg(2+) site. The helical transmembrane segment at 686–702 (ITIALGLKGIFLVTTLL) threads the bilayer. Residues 703-707 (GMTGL) lie on the Periplasmic side of the membrane. Residues 708–729 (WLAVLADTGATVLVTANALRLL) form a helical membrane-spanning segment. Residue D714 coordinates Zn(2+). Over 730 to 732 (RRR) the chain is Cytoplasmic.

Belongs to the cation transport ATPase (P-type) (TC 3.A.3) family. Type IB subfamily.

The protein resides in the cell inner membrane. It catalyses the reaction Pb(2+)(in) + ATP + H2O = Pb(2+)(out) + ADP + phosphate + H(+). The enzyme catalyses Zn(2+)(in) + ATP + H2O = Zn(2+)(out) + ADP + phosphate + H(+). The catalysed reaction is Cd(2+)(in) + ATP + H2O = Cd(2+)(out) + ADP + phosphate + H(+). Its activity is regulated as follows. Inhibited by orthovanadate. Confers resistance to zinc, cadmium and lead. Couples the hydrolysis of ATP with the export of zinc, cadmium or lead, with highest activity when the metals are present as metal-thiolate complexes. Can also bind nickel, copper, cobalt and mercury. The polypeptide is Zinc/cadmium/lead-transporting P-type ATPase (Escherichia coli (strain K12)).